The chain runs to 372 residues: MRANQPVFRDRNGLAAASTYQAVIDAERQPELFSNAGGIRPDQPALPMMIDMDDPAHLLRRKLVNAGFTRKRVKDKEASIAALCDTLIDAVCERGECDFVRDLAAPLPMAVIGDMLGVRPEQRDMFLRWSDDLVTFLSSHVSQEDFQITMDAFAAYNDFTRATIAARRADPTDDLVSVLVSSEVDGERLSDDELVMETLLILIGGDETTRHTLSGGTEQLLRNRDQWDLLQRDPSLLPGAIEEMLRWTAPVKNMCRVLTADTEFHGTALCAGEKMMLLFESANFDEAVFCEPEKFDVQRNPNSHLAFGFGTHFCLGNQLARLELSLMTERVLRRLPDLRLVADDSVLPLRPANFVSGLESMPVVFTPSPPLG.

Position 314 (C314) interacts with heme.

Belongs to the cytochrome P450 family. Requires heme as cofactor.

The catalysed reaction is cholest-4-en-3-one + 6 reduced [2Fe-2S]-[ferredoxin] + 3 O2 + 5 H(+) = (25R)-3-oxocholest-4-en-26-oate + 6 oxidized [2Fe-2S]-[ferredoxin] + 4 H2O. The protein operates within steroid metabolism; cholesterol degradation. In terms of biological role, involved in the utilization of cholesterol as the sole carbon and energy source by degrading the side chain during infection. Primarily catalyzes the sequential oxidation of the terminal methyl of cholest-4-en-3-one into (25R)-26-hydroxycholest-4-en-3-one (alcohol), (25R)-26-oxocholest-4-en-3-one (aldehyde), to finally yield the carboxylic acid (25R)-3-oxocholest-4-en-26-oate. Also able to sequentially oxidize cholesterol itself, not only cholest-4-en-3-one. The polypeptide is Steroid C26-monooxygenase (cyp142) (Mycobacterium tuberculosis (strain CDC 1551 / Oshkosh)).